Here is a 463-residue protein sequence, read N- to C-terminus: L-seryl-tRNA(Sec) selenium transferase (463 aa).

Lys294 carries the post-translational modification N6-(pyridoxal phosphate)lysine.

This sequence belongs to the SelA family. Pyridoxal 5'-phosphate is required as a cofactor.

Its subcellular location is the cytoplasm. The enzyme catalyses L-seryl-tRNA(Sec) + selenophosphate + H(+) = L-selenocysteinyl-tRNA(Sec) + phosphate. Its pathway is aminoacyl-tRNA biosynthesis; selenocysteinyl-tRNA(Sec) biosynthesis; selenocysteinyl-tRNA(Sec) from L-seryl-tRNA(Sec) (bacterial route): step 1/1. Converts seryl-tRNA(Sec) to selenocysteinyl-tRNA(Sec) required for selenoprotein biosynthesis. In Hyphomonas neptunium (strain ATCC 15444), this protein is L-seryl-tRNA(Sec) selenium transferase.